A 131-amino-acid chain; its full sequence is Protein FAM107B (131 aa).

A2 is modified (N-acetylalanine). 2 disordered regions span residues 39 to 78 (MNQKRGLAPQNKPELQKVMEKRRRDQVIKQKEEEAQKKKS) and 100 to 131 (KLQEEQENAPEFVKVKGNLRRTGQEVAQAQES). Residue K50 is modified to N6-acetyllysine. The span at 52-78 (ELQKVMEKRRRDQVIKQKEEEAQKKKS) shows a compositional bias: basic and acidic residues. Residues 61-112 (RRDQVIKQKEEEAQKKKSDLEIELLKRQQKLEQLELEKQKLQEEQENAPEFV) are a coiled coil.

Belongs to the FAM107 family.

This Rattus norvegicus (Rat) protein is Protein FAM107B.